The chain runs to 180 residues: Formate hydrogenlyase subunit 6 (180 aa).

2 4Fe-4S ferredoxin-type domains span residues 31–60 (GKPE…VETD) and 66–95 (LAWE…LSQE). Residues C40, C43, C46, C50, C75, C78, C81, and C85 each contribute to the [4Fe-4S] cluster site.

FHL comprises of a formate dehydrogenase, unidentified electron carriers and a hydrogenase (isoenzyme 3). In this non-energy conserving pathway, molecular hydrogen and carbodioxide are released from formate.

In terms of biological role, probable electron transfer protein for hydrogenase 3. This is Formate hydrogenlyase subunit 6 (hycF) from Escherichia coli (strain K12).